The sequence spans 316 residues: HTH-type transcriptional regulator PecT (316 aa).

The HTH lysR-type domain occupies 11-68 (LDLDLLRTFVAVADLNTFAAAAVAVCRTQSAVSQQMQRLEQLIGKELFARHGRNKLLT). Residues 28 to 47 (FAAAAVAVCRTQSAVSQQMQ) constitute a DNA-binding region (H-T-H motif). Positions 293-316 (LPVSTGTESELREPPTDESLKDIT) are disordered. The span at 301 to 316 (SELREPPTDESLKDIT) shows a compositional bias: basic and acidic residues.

Belongs to the LysR transcriptional regulatory family.

Functionally, regulates pectinase gene expression. The protein is HTH-type transcriptional regulator PecT (pecT) of Dickeya dadantii (strain 3937) (Erwinia chrysanthemi (strain 3937)).